The chain runs to 59 residues: Large ribosomal subunit protein uL30 (59 aa).

The protein belongs to the universal ribosomal protein uL30 family. As to quaternary structure, part of the 50S ribosomal subunit.

This chain is Large ribosomal subunit protein uL30, found in Persephonella marina (strain DSM 14350 / EX-H1).